Here is a 269-residue protein sequence, read N- to C-terminus: Phosphonoacetaldehyde hydrolase (269 aa).

Asp-10 acts as the Nucleophile in catalysis. Positions 10 and 12 each coordinate Mg(2+). Catalysis depends on Lys-52, which acts as the Schiff-base intermediate with substrate. Asp-186 serves as a coordination point for Mg(2+).

It belongs to the HAD-like hydrolase superfamily. PhnX family. As to quaternary structure, homodimer. It depends on Mg(2+) as a cofactor.

The enzyme catalyses phosphonoacetaldehyde + H2O = acetaldehyde + phosphate + H(+). Its function is as follows. Involved in phosphonate degradation. This is Phosphonoacetaldehyde hydrolase (phnX) from Salmonella typhimurium (strain LT2 / SGSC1412 / ATCC 700720).